Reading from the N-terminus, the 393-residue chain is Protein TsgA (393 aa).

12 helical membrane-spanning segments follow: residues 11–31 (WISFLSYALTGALVIVTGMVM), 51–71 (FLNAGILISIFLNAWLMEIVP), 78–98 (FGFLLMVLAVAGLMFSHSLAL), 101–121 (AAMFILGVVSGITMSIGTFLV), 134–154 (LLFTDSFFSMAGMIFPMIAAF), 162–182 (WYWVYACIGLVYVAIFILTFG), 206–226 (IGVLFLSVAALCYILGQLGFI), 245–265 (TLVSNFWMSYMVGMWAFSFIL), 273–293 (ILTVLAGLAAILMYVFNTGTP), 297–317 (AWSILALGFFSSAIYTTIITL), 332–352 (FVLTCGTIGTMLTFVVTGPIV), and 361–381 (LLTANGLYAVVFVMCFLLGFV).

It belongs to the major facilitator superfamily. TsgA family.

The protein localises to the cell inner membrane. The chain is Protein TsgA from Escherichia coli O139:H28 (strain E24377A / ETEC).